The primary structure comprises 347 residues: GMP reductase (347 aa).

NADP(+) is bound at residue 108–131 (ADFEKTKQILDLNPALNFVCIDVA). K(+)-binding residues include Gly181 and Gly183. Cys186 (thioimidate intermediate) is an active-site residue. NADP(+) is bound at residue 216–239 (IVSDGGCTTPGDVAKAFGGGADFV).

It belongs to the IMPDH/GMPR family. GuaC type 1 subfamily. As to quaternary structure, homotetramer.

The enzyme catalyses IMP + NH4(+) + NADP(+) = GMP + NADPH + 2 H(+). Catalyzes the irreversible NADPH-dependent deamination of GMP to IMP. It functions in the conversion of nucleobase, nucleoside and nucleotide derivatives of G to A nucleotides, and in maintaining the intracellular balance of A and G nucleotides. The polypeptide is GMP reductase (Shigella boydii serotype 4 (strain Sb227)).